Consider the following 934-residue polypeptide: Bifunctional uridylyltransferase/uridylyl-removing enzyme (934 aa).

Positions 1 to 379 are uridylyltransferase; sequence MSAHDLKLEE…TFSRRKRKLS (379 aa). Residues 380–736 are uridylyl-removing; that stretch reads DDGAFISENH…AKPHAFEAVT (357 aa). Residues 496–613 enclose the HD domain; sequence VDEHLLRCIA…IDFADTVQTM (118 aa). ACT domains lie at 737 to 818 and 848 to 931; these read EITV…DMLA and VIEV…RSPQ.

It belongs to the GlnD family. Mg(2+) serves as cofactor.

The enzyme catalyses [protein-PII]-L-tyrosine + UTP = [protein-PII]-uridylyl-L-tyrosine + diphosphate. It carries out the reaction [protein-PII]-uridylyl-L-tyrosine + H2O = [protein-PII]-L-tyrosine + UMP + H(+). Uridylyltransferase (UTase) activity is inhibited by glutamine, while glutamine activates uridylyl-removing (UR) activity. Functionally, modifies, by uridylylation and deuridylylation, the PII regulatory proteins (GlnB and homologs), in response to the nitrogen status of the cell that GlnD senses through the glutamine level. Under low glutamine levels, catalyzes the conversion of the PII proteins and UTP to PII-UMP and PPi, while under higher glutamine levels, GlnD hydrolyzes PII-UMP to PII and UMP (deuridylylation). Thus, controls uridylylation state and activity of the PII proteins, and plays an important role in the regulation of nitrogen assimilation and metabolism. The protein is Bifunctional uridylyltransferase/uridylyl-removing enzyme of Brucella suis biovar 1 (strain 1330).